We begin with the raw amino-acid sequence, 1060 residues long: Protein FAM184B (1060 aa).

A compositionally biased stretch (polar residues) spans 1–17 (MASALNSKINPPGTCQG). The interval 1-24 (MASALNSKINPPGTCQGSKADGGA) is disordered. Residues 51-159 (ALNTRQDEAE…EMLELKADYE (109 aa)) adopt a coiled-coil conformation. Positions 165 to 191 (LTSHEATPQGRLPQESPETKSEPGQGP) are disordered. Coiled coils occupy residues 192-333 (EMQE…DRMM) and 402-502 (MKQQ…RLEE). Disordered regions lie at residues 532–566 (QDPC…EERT), 681–700 (TEER…HQTH), and 762–803 (GRQQ…GSGE). Basic and acidic residues-rich tracts occupy residues 536–554 (LKLD…KLAA), 681–690 (TEERLKKESS), and 773–785 (DSKD…EERG). The stretch at 584–769 (LKEKTSKIQR…ALGRQQASSQ (186 aa)) forms a coiled coil. Residues 806-934 (GLWEENAQLQ…KQLTEERRFH (129 aa)) are a coiled coil. 2 stretches are compositionally biased toward polar residues: residues 994–1009 (SRIN…SLDP) and 1018–1030 (KPNQ…TATR). The tract at residues 994–1050 (SRINAPPITTSPSLDPSPSCGRTYKPNQSTDAKTATRTPDGETAQAKEVQQKQGSPH) is disordered.

Belongs to the FAM184 family.

The protein is Protein FAM184B (FAM184B) of Homo sapiens (Human).